The primary structure comprises 229 residues: UPF0441 protein YE3666 (229 aa).

2 disordered regions span residues 101-125 (PAQA…QQSG) and 190-229 (KPAV…SMGG). 2 stretches are compositionally biased toward low complexity: residues 109 to 120 (TSSSSSETTAAA) and 214 to 229 (RSAA…SMGG).

This sequence belongs to the UPF0441 family.

The sequence is that of UPF0441 protein YE3666 from Yersinia enterocolitica serotype O:8 / biotype 1B (strain NCTC 13174 / 8081).